Reading from the N-terminus, the 183-residue chain is Capsid protein (183 aa).

The disordered stretch occupies residues leucine 143 to cysteine 183. Positions valine 149 to serine 176 are enriched in basic residues. Phosphoserine; by host occurs at positions 155, 162, and 170. One copy of the 1; half-length repeat lies at serine 155–threonine 160. The 3 X 7 AA repeats of S-P-R-R-R-[PR]-S stretch occupies residues serine 155–serine 176. The Bipartite nuclear localization signal signature appears at arginine 158–arginine 175. 2 consecutive repeat copies span residues serine 162–serine 168 and serine 170–serine 176. An RNA binding region spans residues glutamine 177–cysteine 183.

The protein belongs to the orthohepadnavirus core antigen family. Homodimerizes, then multimerizes. Interacts with cytosol exposed regions of viral L glycoprotein present in the reticulum-to-Golgi compartment. Interacts with human FLNB. Phosphorylated form interacts with host importin alpha; this interaction depends on the exposure of the NLS, which itself depends upon genome maturation and/or phosphorylation of the capsid protein. Interacts with host NUP153. In terms of processing, phosphorylated by host SRPK1, SRPK2, and maybe protein kinase C or GAPDH. Phosphorylation is critical for pregenomic RNA packaging. Protein kinase C phosphorylation is stimulated by HBx protein and may play a role in transport of the viral genome to the nucleus at the late step during the viral replication cycle.

Its subcellular location is the virion. The protein resides in the host cytoplasm. Self assembles to form an icosahedral capsid. Most capsids appear to be large particles with an icosahedral symmetry of T=4 and consist of 240 copies of capsid protein, though a fraction forms smaller T=3 particles consisting of 180 capsid proteins. Entering capsids are transported along microtubules to the nucleus. Phosphorylation of the capsid is thought to induce exposure of nuclear localization signal in the C-terminal portion of the capsid protein that allows binding to the nuclear pore complex via the importin (karyopherin-) alpha and beta. Capsids are imported in intact form through the nuclear pore into the nuclear basket, where it probably binds NUP153. Only capsids that contain the mature viral genome can release the viral DNA and capsid protein into the nucleoplasm. Immature capsids get stuck in the basket. Capsids encapsulate the pre-genomic RNA and the P protein. Pre-genomic RNA is reverse-transcribed into DNA while the capsid is still in the cytoplasm. The capsid can then either be directed to the nucleus, providing more genomes for transcription, or bud through the endoplasmic reticulum to provide new virions. This is Capsid protein from Homo sapiens (Human).